We begin with the raw amino-acid sequence, 449 residues long: Phosphoglucosamine mutase (449 aa).

The active-site Phosphoserine intermediate is the serine 100. Serine 100, aspartate 241, aspartate 243, and aspartate 245 together coordinate Mg(2+). Residue serine 100 is modified to Phosphoserine.

It belongs to the phosphohexose mutase family. Requires Mg(2+) as cofactor. Post-translationally, activated by phosphorylation.

It catalyses the reaction alpha-D-glucosamine 1-phosphate = D-glucosamine 6-phosphate. Catalyzes the conversion of glucosamine-6-phosphate to glucosamine-1-phosphate. This is Phosphoglucosamine mutase from Clostridium botulinum (strain Kyoto / Type A2).